The primary structure comprises 176 residues: ATP synthase subunit b 2 (176 aa).

The helical transmembrane segment at 29–49 (IFWLVITLVIIYMVLSKVALP) threads the bilayer.

The protein belongs to the ATPase B chain family. F-type ATPases have 2 components, F(1) - the catalytic core - and F(0) - the membrane proton channel. F(1) has five subunits: alpha(3), beta(3), gamma(1), delta(1), epsilon(1). F(0) has three main subunits: a(1), b(2) and c(10-14). The alpha and beta chains form an alternating ring which encloses part of the gamma chain. F(1) is attached to F(0) by a central stalk formed by the gamma and epsilon chains, while a peripheral stalk is formed by the delta and b chains.

Its subcellular location is the cell inner membrane. F(1)F(0) ATP synthase produces ATP from ADP in the presence of a proton or sodium gradient. F-type ATPases consist of two structural domains, F(1) containing the extramembraneous catalytic core and F(0) containing the membrane proton channel, linked together by a central stalk and a peripheral stalk. During catalysis, ATP synthesis in the catalytic domain of F(1) is coupled via a rotary mechanism of the central stalk subunits to proton translocation. Its function is as follows. Component of the F(0) channel, it forms part of the peripheral stalk, linking F(1) to F(0). The b'-subunit is a diverged and duplicated form of b found in plants and photosynthetic bacteria. This Roseobacter denitrificans (strain ATCC 33942 / OCh 114) (Erythrobacter sp. (strain OCh 114)) protein is ATP synthase subunit b 2 (atpF2).